The following is a 185-amino-acid chain: Ribosome-recycling factor (185 aa).

The protein belongs to the RRF family.

Its subcellular location is the cytoplasm. Responsible for the release of ribosomes from messenger RNA at the termination of protein biosynthesis. May increase the efficiency of translation by recycling ribosomes from one round of translation to another. The chain is Ribosome-recycling factor from Geobacter metallireducens (strain ATCC 53774 / DSM 7210 / GS-15).